A 309-amino-acid chain; its full sequence is Ornithine carbamoyltransferase (309 aa).

Carbamoyl phosphate-binding positions include S51–T54, Q78, R102, and H129–Q132. Residues N160, D224, and S228–M229 each bind L-ornithine. Carbamoyl phosphate is bound by residues C264–L265 and R292.

This sequence belongs to the aspartate/ornithine carbamoyltransferase superfamily. OTCase family.

It is found in the cytoplasm. It catalyses the reaction carbamoyl phosphate + L-ornithine = L-citrulline + phosphate + H(+). The protein operates within amino-acid biosynthesis; L-arginine biosynthesis; L-arginine from L-ornithine and carbamoyl phosphate: step 1/3. In terms of biological role, reversibly catalyzes the transfer of the carbamoyl group from carbamoyl phosphate (CP) to the N(epsilon) atom of ornithine (ORN) to produce L-citrulline. This chain is Ornithine carbamoyltransferase, found in Campylobacter fetus subsp. fetus (strain 82-40).